The primary structure comprises 249 residues: Low affinity immunoglobulin gamma Fc region receptor III-A (249 aa).

Residues 1–20 (MWQLLLPTALVLTAFSGIQA) form the signal peptide. At 21–203 (GLQKAVVNLD…SPSMFPPWHQ (183 aa)) the chain is on the extracellular side. Ig-like C2-type domains follow at residues 22–102 (LQKA…VQLE) and 119–188 (EGDP…FRIS). 2 cysteine pairs are disulfide-bonded: C46–C88 and C127–C171. N-linked (GlcNAc...) asparagine glycans are attached at residues N62, N164, and N179. Residues 204-224 (ITFCLLIGLLFAIDTVLYFSV) traverse the membrane as a helical segment. The Cytoplasmic segment spans residues 225-249 (RRGLQSPVADYEEPKIQWSKEPQDK). A Phosphotyrosine modification is found at Y235.

As to quaternary structure, forms a heterooligomeric complex with ITAM-containing signaling subunits FCER1G. Interacts (via transmembrane domain) with signaling subunits; this interaction is a prerequisite for receptor complex expression on the cell surface and intracellular signal transduction. Binds the Fc region of antigen-complexed IgG. In terms of processing, N-glycosylated. Post-translationally, phosphorylated following receptor ligation. In terms of tissue distribution, detected on myeloid cells, peripheral blood monocytes, splenic and bone marrow dendritic cells, and thioglycollate-elicited macrophages and neutrophils but absent from lymphoid populations with no expression observed on T cells, B cells, NK cells or other granulocytes (at protein level). Expressed in peripheral blood leukocytes, spleen, liver, thymus and small intestine. Expressed in splenic dendritic cell subsets (at protein level).

The protein resides in the cell membrane. Receptor for the invariable Fc fragment of immunoglobulin gamma (IgG). Binds with intermediate affinity to both IgG2a and IgG2b. Can bind to IgG2a and IgG2b monomers. Does not display binding to IgG1 or IgG3. Recognizes neutralizing virus-specific IgGs displayed on the cell surface of infected cells and triggers antibody-dependent cellular cytotoxicity (ADCC). Confers protection to lethal influenza virus infection. On splenic dendritic cells, uptakes antigen immune complexes and efficiently divert them into MHC class I and II antigen presentation pathways to provide for superior priming of CD4-positive and CD8-positive T cell immune responses. Mediates neutrophil activation by IgG complexes redundantly with FCGR2A. Plays a role in promoting bone resorption by enhancing osteoclast differentiation following binding to IgG2a. Also acts as a receptor for the Fc region of immunoglobulin epsilon (IgE). Binds with low affinity to both the a and b allotypes of IgE. Has also been shown to bind to IgE allotype a only but not to allotype b. Binds aggregated IgE but not the monomeric form and bound monomeric IgG is readily displaced by IgE complexes. Binding to IgE promotes macrophage-mediated phagocytosis, antigen presentation to T cells, production of pro-inflammatory cytokines and the late phase of cutaneous allergic reactions. Mediates enhanced ADCC in response to afucosylated IgGs. The chain is Low affinity immunoglobulin gamma Fc region receptor III-A from Mus musculus (Mouse).